The chain runs to 201 residues: FMN-dependent NADH:quinone oxidoreductase (201 aa).

FMN-binding positions include Ser-10, 16 to 18 (SQS), 96 to 99 (MYNF), and 140 to 143 (SRGG).

This sequence belongs to the azoreductase type 1 family. As to quaternary structure, homodimer. It depends on FMN as a cofactor.

It carries out the reaction 2 a quinone + NADH + H(+) = 2 a 1,4-benzosemiquinone + NAD(+). The enzyme catalyses N,N-dimethyl-1,4-phenylenediamine + anthranilate + 2 NAD(+) = 2-(4-dimethylaminophenyl)diazenylbenzoate + 2 NADH + 2 H(+). In terms of biological role, quinone reductase that provides resistance to thiol-specific stress caused by electrophilic quinones. Also exhibits azoreductase activity. Catalyzes the reductive cleavage of the azo bond in aromatic azo compounds to the corresponding amines. The polypeptide is FMN-dependent NADH:quinone oxidoreductase (Citrobacter koseri (strain ATCC BAA-895 / CDC 4225-83 / SGSC4696)).